The chain runs to 743 residues: Catalase-peroxidase (743 aa).

The disordered stretch occupies residues 1–29; that stretch reads MNAESGENAGGGCPLGHGAGAPRKRPSNR. Positions 8–19 are enriched in gly residues; the sequence is NAGGGCPLGHGA. A cross-link (tryptophyl-tyrosyl-methioninium (Trp-Tyr) (with M-248)) is located at residues 100-222; it reads WHSAGTYRIT…LGAVQMGLIY (123 aa). Histidine 101 acts as the Proton acceptor in catalysis. A cross-link (tryptophyl-tyrosyl-methioninium (Tyr-Met) (with W-100)) is located at residues 222-248; sequence YVNPEGPNGNPDPKAAAVDIRETFARM. Histidine 263 is a heme b binding site.

This sequence belongs to the peroxidase family. Peroxidase/catalase subfamily. As to quaternary structure, homodimer or homotetramer. Heme b is required as a cofactor. Formation of the three residue Trp-Tyr-Met cross-link is important for the catalase, but not the peroxidase activity of the enzyme.

It carries out the reaction H2O2 + AH2 = A + 2 H2O. The enzyme catalyses 2 H2O2 = O2 + 2 H2O. Bifunctional enzyme with both catalase and broad-spectrum peroxidase activity. The chain is Catalase-peroxidase from Stutzerimonas stutzeri (strain A1501) (Pseudomonas stutzeri).